The following is a 796-amino-acid chain: Nuclear GTPase SLIP-GC (796 aa).

Residues 1–22 (MAETKDVFGQEPHPVEDDLYKE) are compositionally biased toward basic and acidic residues. The tract at residues 1–35 (MAETKDVFGQEPHPVEDDLYKERTRKRRKSDRDQR) is disordered. 107–114 (GSTGAGKS) contributes to the GTP binding site. 2 coiled-coil regions span residues 158 to 185 (SDQE…EEAD) and 745 to 775 (KELA…RLRK).

In terms of tissue distribution, expressed in germinal center B-cell and in lymphomas derived from germinal center B-cell.

The protein resides in the nucleus speckle. Nuclear GTPase found in germinal center B-cells, where it may inhibit function of the activation-induced cytidine deaminase AICDA. Reduces somatic hypermutation in B-cells which may enhance genome stability. This Homo sapiens (Human) protein is Nuclear GTPase SLIP-GC (NUGGC).